We begin with the raw amino-acid sequence, 245 residues long: 1-(5-phosphoribosyl)-5-[(5-phosphoribosylamino)methylideneamino] imidazole-4-carboxamide isomerase (245 aa).

Aspartate 8 acts as the Proton acceptor in catalysis. The active-site Proton donor is aspartate 130.

It belongs to the HisA/HisF family.

It is found in the cytoplasm. It catalyses the reaction 1-(5-phospho-beta-D-ribosyl)-5-[(5-phospho-beta-D-ribosylamino)methylideneamino]imidazole-4-carboxamide = 5-[(5-phospho-1-deoxy-D-ribulos-1-ylimino)methylamino]-1-(5-phospho-beta-D-ribosyl)imidazole-4-carboxamide. Its pathway is amino-acid biosynthesis; L-histidine biosynthesis; L-histidine from 5-phospho-alpha-D-ribose 1-diphosphate: step 4/9. The polypeptide is 1-(5-phosphoribosyl)-5-[(5-phosphoribosylamino)methylideneamino] imidazole-4-carboxamide isomerase (Pseudomonas syringae pv. tomato (strain ATCC BAA-871 / DC3000)).